A 354-amino-acid polypeptide reads, in one-letter code: Methylthioribose-1-phosphate isomerase (354 aa).

Residues 49-51 (RGA), Arg-92, and Gln-199 each bind substrate. Catalysis depends on Asp-240, which acts as the Proton donor. 250-251 (NK) serves as a coordination point for substrate.

Belongs to the eIF-2B alpha/beta/delta subunits family. MtnA subfamily.

It catalyses the reaction 5-(methylsulfanyl)-alpha-D-ribose 1-phosphate = 5-(methylsulfanyl)-D-ribulose 1-phosphate. It participates in amino-acid biosynthesis; L-methionine biosynthesis via salvage pathway; L-methionine from S-methyl-5-thio-alpha-D-ribose 1-phosphate: step 1/6. Functionally, catalyzes the interconversion of methylthioribose-1-phosphate (MTR-1-P) into methylthioribulose-1-phosphate (MTRu-1-P). The chain is Methylthioribose-1-phosphate isomerase from Koribacter versatilis (strain Ellin345).